A 719-amino-acid chain; its full sequence is Polyribonucleotide nucleotidyltransferase (719 aa).

Residues aspartate 487 and aspartate 493 each coordinate Mg(2+). The region spanning 554–613 (PRIETFKIATDKIREVIGTGGKVIREIVEKTGAKVNIEDDGTVKVASSDGEAMKAAIKWI) is the KH domain. The region spanning 623 to 691 (GQIYDGTVVK…DRGKTRLSMK (69 aa)) is the S1 motif domain. The segment at 691 to 719 (KVVDQTTGEDLEAKQKDAPAEAPREAAGE) is disordered. Basic and acidic residues predominate over residues 701–719 (LEAKQKDAPAEAPREAAGE).

The protein belongs to the polyribonucleotide nucleotidyltransferase family. Requires Mg(2+) as cofactor.

It is found in the cytoplasm. It catalyses the reaction RNA(n+1) + phosphate = RNA(n) + a ribonucleoside 5'-diphosphate. In terms of biological role, involved in mRNA degradation. Catalyzes the phosphorolysis of single-stranded polyribonucleotides processively in the 3'- to 5'-direction. The protein is Polyribonucleotide nucleotidyltransferase of Bradyrhizobium sp. (strain ORS 278).